The chain runs to 143 residues: Large ribosomal subunit protein uL11 (143 aa).

This sequence belongs to the universal ribosomal protein uL11 family. Part of the ribosomal stalk of the 50S ribosomal subunit. Interacts with L10 and the large rRNA to form the base of the stalk. L10 forms an elongated spine to which L12 dimers bind in a sequential fashion forming a multimeric L10(L12)X complex. One or more lysine residues are methylated.

Its function is as follows. Forms part of the ribosomal stalk which helps the ribosome interact with GTP-bound translation factors. The polypeptide is Large ribosomal subunit protein uL11 (Herminiimonas arsenicoxydans).